The chain runs to 79 residues: MYDIVGTNNSILIANVLVLIIICLLVVIVGCALLLILQFVFGVCGFVFKFVCKPTILVYNKFRNESLLNEREELLCDNV.

Residues 1–16 (MYDIVGTNNSILIANV) are Virion surface-facing. Residues 17–37 (LVLIIICLLVVIVGCALLLIL) form a helical membrane-spanning segment. Over 38 to 75 (QFVFGVCGFVFKFVCKPTILVYNKFRNESLLNEREELL) the chain is Intravirion.

The protein belongs to the betacoronaviruses E protein family. As to quaternary structure, homopentamer. Interacts with membrane protein M in the budding compartment of the host cell, which is located between endoplasmic reticulum and the Golgi complex. Interacts with Nucleoprotein.

Its subcellular location is the host Golgi apparatus membrane. Plays a central role in virus morphogenesis and assembly. Acts as a viroporin and self-assembles in host membranes forming pentameric protein-lipid pores that allow ion transport. Also plays a role in the induction of apoptosis. The polypeptide is Envelope small membrane protein (Rousettus leschenaultii (Leschenault's rousette)).